The primary structure comprises 241 residues: MILRKKLSYLWTLGLCLVASKSPPKAPSITNDRFIEECLRLHNEARTNVSPPAADMKYMSWDEALAKTAEAWAKKCKFIHNSCSSKSFKCHPTFQYAGENLWLGPLTISAAKFAINMWYDERKFYDFNTRSCSQVCGHYTQVVWAYSYKVGCAVAVCPNLGSPDSALLVCNYAPAGNYPNMSPYTNGTPCSMCQGDTCENNLCRNKERDKSQRYPNWNPSGTRQLIACNPLYLISVLLTIF.

A signal peptide spans 1–22 (MILRKKLSYLWTLGLCLVASKS). An SCP domain is found at 39–172 (LRLHNEARTN…PDSALLVCNY (134 aa)). S220 carries the GPI-anchor amidated serine lipid modification. The propeptide at 221–241 (GTRQLIACNPLYLISVLLTIF) is removed in mature form.

The protein belongs to the CRISP family. In terms of assembly, part of a oolemmal binding multimeric complex (IZUMO1 complex) composed at least of IZUMO1 and GLIPR1L1; the complex assemblage is influenced by the maturation status of the male germ cell. Interacts with IZUMO1. N-glycosylated. N-glycosylation decreases during the transit in the caput. As to expression, highly expressed in testis, where it localizes to round and elongating spermatids and differentiated spermatozoa in the seminiferous tubules and epididymis (at protein level).

The protein localises to the cytoplasmic vesicle. It is found in the secretory vesicle. It localises to the acrosome. Its subcellular location is the cell membrane. The protein resides in the membrane raft. Its function is as follows. Required for optimal fertilization at the stage of sperm-oocyte fusion, plays a role in optimizing acrosome function, the translocation of IZUMO1 during the acrosome reaction and the fertilization process. Component of epididymosomes, one type of membranous microvesicules which mediate the transfer of lipids and proteins to spermatozoa plasma membrane during epididymal maturation. Also a component of the CD9-positive microvesicules found in the cauda region. The protein is GLIPR1-like protein 1 of Bos taurus (Bovine).